Reading from the N-terminus, the 502-residue chain is ATP synthase subunit alpha (502 aa).

The interval 114–139 (PIDGRGPIETSKTRPIESPAPGVMDR) is disordered. 169 to 176 (GDRQTGKT) provides a ligand contact to ATP.

This sequence belongs to the ATPase alpha/beta chains family. As to quaternary structure, F-type ATPases have 2 components, CF(1) - the catalytic core - and CF(0) - the membrane proton channel. CF(1) has five subunits: alpha(3), beta(3), gamma(1), delta(1), epsilon(1). CF(0) has three main subunits: a(1), b(2) and c(9-12). The alpha and beta chains form an alternating ring which encloses part of the gamma chain. CF(1) is attached to CF(0) by a central stalk formed by the gamma and epsilon chains, while a peripheral stalk is formed by the delta and b chains.

The protein resides in the cell membrane. It catalyses the reaction ATP + H2O + 4 H(+)(in) = ADP + phosphate + 5 H(+)(out). Functionally, produces ATP from ADP in the presence of a proton gradient across the membrane. The alpha chain is a regulatory subunit. This Halalkalibacterium halodurans (strain ATCC BAA-125 / DSM 18197 / FERM 7344 / JCM 9153 / C-125) (Bacillus halodurans) protein is ATP synthase subunit alpha.